The sequence spans 206 residues: Large ribosomal subunit protein uL4 (206 aa).

The disordered stretch occupies residues 63 to 97 (MYKQKGTGRARHHSARAPQFRGGGKAHGPVVRSHE). Over residues 64–77 (YKQKGTGRARHHSA) the composition is skewed to basic residues.

This sequence belongs to the universal ribosomal protein uL4 family. In terms of assembly, part of the 50S ribosomal subunit.

Its function is as follows. One of the primary rRNA binding proteins, this protein initially binds near the 5'-end of the 23S rRNA. It is important during the early stages of 50S assembly. It makes multiple contacts with different domains of the 23S rRNA in the assembled 50S subunit and ribosome. In terms of biological role, forms part of the polypeptide exit tunnel. This is Large ribosomal subunit protein uL4 from Rhizobium leguminosarum bv. trifolii (strain WSM2304).